The chain runs to 113 residues: Small ribosomal subunit protein bS6 (113 aa).

It belongs to the bacterial ribosomal protein bS6 family.

Binds together with bS18 to 16S ribosomal RNA. This Flavobacterium psychrophilum (strain ATCC 49511 / DSM 21280 / CIP 103535 / JIP02/86) protein is Small ribosomal subunit protein bS6.